A 171-amino-acid polypeptide reads, in one-letter code: MSGSGAAGAAAGPAPPAQEEGMTWWYRWLCRLAGVLGAVSCAISGLFNCVTIHPLNIAAGVWMIMNAFILLLCEAPFCCQFVEFANTVAEKVDRLRSWQKAVFYCGMAIVPIVMSLTLTTLLGNAIAFATGVLYGLSALGKKGDAISYARIQQQRQQADEEKLAETFEGEL.

Residues 1–31 (MSGSGAAGAAAGPAPPAQEEGMTWWYRWLCR) are Cytoplasmic-facing. The helical transmembrane segment at 32–52 (LAGVLGAVSCAISGLFNCVTI) threads the bilayer. Topologically, residues 53–56 (HPLN) are extracellular. A helical membrane pass occupies residues 57–77 (IAAGVWMIMNAFILLLCEAPF). The Cytoplasmic segment spans residues 78-101 (CCQFVEFANTVAEKVDRLRSWQKA). Residues 102-122 (VFYCGMAIVPIVMSLTLTTLL) form a helical membrane-spanning segment. At 123 to 124 (GN) the chain is on the extracellular side. The chain crosses the membrane as a helical span at residues 125 to 141 (AIAFATGVLYGLSALGK). Residues 142–171 (KGDAISYARIQQQRQQADEEKLAETFEGEL) lie on the Cytoplasmic side of the membrane.

The protein belongs to the calcium channel flower family. Interacts with adaptor protein complex 2 (AP-2). In terms of tissue distribution, expressed in neurons in the brain (at protein level). Expressed in neuroblastoma cell lines (at protein level). Expressed in cytotoxic T-lymphoocytes (at protein level). Low levels of expression in various tissues including the brain, eye, heart, liver and colon. Expression in the heart is at slightly higher levels than isoform 3. Expressed in skin cells. As to expression, very low levels of expression in the brain, liver and eye. Detected at very low levels of expression in skin cells. In terms of tissue distribution, expressed in various tissues, with highest levels of expression in the brain and eye. Expressed in skin cells. Low levels of expression in the liver, colon, heart and spleen. Barely detected in the brain and liver.

The protein resides in the cell membrane. Its subcellular location is the vesicle. Its function is as follows. Transmembrane protein which mediates synaptic endocytosis and fitness-based cell culling. In response to different stimulus strengths, controls two major modes of synaptic vesicle (SV) retrieval in hippocampal neurons; Clathrin-mediated endocytosis (CME) in response to mild stimulation and activity-dependent bulk endocytosis (ADBE) in response to strong stimulation. In cytotoxic T-lymphoocytes (CTLs) facilitates calcium-dependent endocytosis of cytotoxic granules (CGs) at the immuno synapse. Different isoforms work as fitness fingerprints in 'loser' and 'winner' cells and thereby mediate win/lose decisions as part of the cell competition process. The protein is Calcium channel flower homolog (Cacfd1) of Mus musculus (Mouse).